The following is a 154-amino-acid chain: Transcriptional repressor NrdR (154 aa).

Residues 3 to 34 fold into a zinc finger; the sequence is CPFCAHPDTRVADSRLMEERNAVRRRRHCPNC. The 91-residue stretch at 49 to 139 folds into the ATP-cone domain; the sequence is PAVIGPDKKR…LHKRFDNPAD (91 aa).

Belongs to the NrdR family. It depends on Zn(2+) as a cofactor.

Negatively regulates transcription of bacterial ribonucleotide reductase nrd genes and operons by binding to NrdR-boxes. The sequence is that of Transcriptional repressor NrdR from Neisseria meningitidis serogroup B (strain ATCC BAA-335 / MC58).